The chain runs to 517 residues: MFS efflux transporter inpD (517 aa).

The disordered stretch occupies residues 1 to 24; it reads MEKTQTPSLTPDELSARSSTPFEE. The next 5 helical transmembrane spans lie at 37–57, 59–79, 89–109, 112–132, and 151–171; these read LKFSFIFVGLCLSVFQVALSL, DIGWYGSAYLFTDCAFQLVFG, IVYLGALLLFEIGSIICATAP, IALILGRTIAGIGAGGILSGA, and ILGAVNGIAFICGPLLAGGII. The N-linked (GlcNAc...) asparagine glycan is linked to Asn172. 9 consecutive transmembrane segments (helical) span residues 178–198, 219–239, 247–267, 292–312, 328–348, 352–372, 381–401, 412–432, and 485–505; these read WIFYINPIISAPTFFITVFLL, LPAFTLFLGSILCLILALLWG, NARIIVLFILFGVIMLAFMLV, FFSFCTSGTGFILEYYLPIWL, LPIIAAAVVFTTLCGILTPVI, VPFMIIATMLLSVGMGLLSTL, VLGFQVPAGVGLGCALQQTLV, IPIGVSLIVLAQTLGGTIALS, and AIVKTWYLSIGLAAASIIGVL.

The protein belongs to the major facilitator superfamily.

It localises to the cell membrane. Functionally, MFS efflux transporter; part of the inp gene cluster that mediates the biosynthesis of fellutamide B, a mycotoxin that acts as a proteasome inhibitor. In the first step of fellutabmide B biosynthesis inpC activates 3-hydroxydodecanoic acid to generate 3-hydroxydodecanoyl-AMP that is then loaded onto the T0 domain of inpB. The 3-hydroxydodecanoyl-S-phosphopantetheinyl-T0 is sequentially extended with L-Asn and L-Gln by the two CAT modules of inpB. The linear lipodipeptide from inpB is then transferred onto inpA for the addition of the third amino acid, L-Leu. Reductive releasing of the lipotripeptide by the TE domain of inpA produces (2S)-fellutamide B. InpF might be involved in the release and transfer of the lipodipeptide from inpB to inpA. The inp cluster-encoded proteasome subunit inpE confers resistance to internally produced fellutamides. The MFS efflux transporter inpD may contribute to fellutamide resistance as well. The sequence is that of MFS efflux transporter inpD from Emericella nidulans (strain FGSC A4 / ATCC 38163 / CBS 112.46 / NRRL 194 / M139) (Aspergillus nidulans).